We begin with the raw amino-acid sequence, 324 residues long: Glyceraldehyde-3-phosphate dehydrogenase 1 (324 aa).

NAD(+) contacts are provided by residues 13–14 (RI), aspartate 35, and lysine 85. D-glyceraldehyde 3-phosphate is bound by residues 157–159 (SCT), threonine 188, 217–218 (TG), and arginine 240. Cysteine 158 serves as the catalytic Nucleophile. Position 322 (asparagine 322) interacts with NAD(+).

It belongs to the glyceraldehyde-3-phosphate dehydrogenase family. In terms of assembly, homotetramer.

Its subcellular location is the cytoplasm. It carries out the reaction D-glyceraldehyde 3-phosphate + phosphate + NAD(+) = (2R)-3-phospho-glyceroyl phosphate + NADH + H(+). Its pathway is carbohydrate degradation; glycolysis; pyruvate from D-glyceraldehyde 3-phosphate: step 1/5. The sequence is that of Glyceraldehyde-3-phosphate dehydrogenase 1 (GPD-1) from Globodera rostochiensis (Golden nematode worm).